Consider the following 335-residue polypeptide: NADH-quinone oxidoreductase subunit H (335 aa).

8 consecutive transmembrane segments (helical) span residues 15–35 (VVKA…LSFV), 81–101 (MIFT…FSII), 114–134 (IGLL…LFAG), 154–174 (VSYE…VGSF), 187–207 (LWFI…GVAV), 238–258 (FFVG…TLFF), 270–290 (QVPF…FILL), and 307–327 (WKFC…IVLY).

Belongs to the complex I subunit 1 family. In terms of assembly, NDH-1 is composed of 13 different subunits. Subunits NuoA, H, J, K, L, M, N constitute the membrane sector of the complex.

Its subcellular location is the cell inner membrane. The catalysed reaction is a quinone + NADH + 5 H(+)(in) = a quinol + NAD(+) + 4 H(+)(out). Its function is as follows. NDH-1 shuttles electrons from NADH, via FMN and iron-sulfur (Fe-S) centers, to quinones in the respiratory chain. The immediate electron acceptor for the enzyme in this species is believed to be ubiquinone. Couples the redox reaction to proton translocation (for every two electrons transferred, four hydrogen ions are translocated across the cytoplasmic membrane), and thus conserves the redox energy in a proton gradient. This subunit may bind ubiquinone. The sequence is that of NADH-quinone oxidoreductase subunit H from Pseudomonas putida (strain GB-1).